The primary structure comprises 64 residues: Alpha-like toxin BmK M2 (64 aa).

The LCN-type CS-alpha/beta domain maps to 2–64 (RDAYIAKPHN…VPIRVPGKCH (63 aa)). 4 cysteine pairs are disulfide-bonded: cysteine 12-cysteine 63, cysteine 16-cysteine 36, cysteine 22-cysteine 46, and cysteine 26-cysteine 48.

It belongs to the long (4 C-C) scorpion toxin superfamily. Sodium channel inhibitor family. Alpha subfamily. As to expression, expressed by the venom gland.

The protein resides in the secreted. Alpha toxins bind voltage-independently at site-3 of sodium channels (Nav) and inhibit the inactivation of the activated channels, thereby blocking neuronal transmission. This toxin is active against both mammals and insects, and is classified as an alpha-like toxin. The polypeptide is Alpha-like toxin BmK M2 (Olivierus martensii (Manchurian scorpion)).